Here is a 202-residue protein sequence, read N- to C-terminus: MVIQRKYRASRRLGVNLWGRSKDPFNTRNYPPGQHGGMGYKKPSDFGKQFAAHKKFKFYYAINSKQMRNIFLKAYKKRGDTGDNFVGLLESRLSSVLYNSGLVPTIFSARQLISHKHVLVNGKTVNISSYVVKVGDVVTLKEKAKNLPAVVFAVQSQEQKVPDYLEVDTQEKSIRYLRVPKYCEVPYPATMEVNLVIEFYSR.

The 78-residue stretch at 91–168 folds into the S4 RNA-binding domain; it reads SRLSSVLYNS…QKVPDYLEVD (78 aa).

Belongs to the universal ribosomal protein uS4 family. In terms of assembly, part of the 30S ribosomal subunit. Contacts protein S5. The interaction surface between S4 and S5 is involved in control of translational fidelity.

One of the primary rRNA binding proteins, it binds directly to 16S rRNA where it nucleates assembly of the body of the 30S subunit. In terms of biological role, with S5 and S12 plays an important role in translational accuracy. This Ehrlichia chaffeensis (strain ATCC CRL-10679 / Arkansas) protein is Small ribosomal subunit protein uS4.